The sequence spans 368 residues: Endoglucanase (368 aa).

Positions 1 to 21 are cleaved as a signal peptide; it reads MNVLRSGLVTMLLLAAFSVQA. Glu55 (proton donor) is an active-site residue. The active-site Nucleophile is Asp116.

The protein belongs to the glycosyl hydrolase 8 (cellulase D) family.

Its subcellular location is the secreted. It carries out the reaction Endohydrolysis of (1-&gt;4)-beta-D-glucosidic linkages in cellulose, lichenin and cereal beta-D-glucans.. It functions in the pathway glycan metabolism; bacterial cellulose biosynthesis. In terms of biological role, hydrolyzes carboxymethylcellulose. In Escherichia coli O157:H7, this protein is Endoglucanase (bcsZ).